Here is a 504-residue protein sequence, read N- to C-terminus: Anaerobic nitric oxide reductase transcription regulator NorR (504 aa).

Asp57 carries the post-translational modification 4-aspartylphosphate. Residues 187-416 (MIGLSPGMTQ…LEHAIHRAVV (230 aa)) form the Sigma-54 factor interaction domain. ATP is bound by residues 215–222 (GETGTGKE) and 278–287 (ADNGTLFLDE). The segment at residues 479-498 (WAACARMLETDVANLHRLAK) is a DNA-binding region (H-T-H motif).

Its pathway is nitrogen metabolism; nitric oxide reduction. In terms of biological role, required for the expression of anaerobic nitric oxide (NO) reductase, acts as a transcriptional activator for at least the norVW operon. Activation also requires sigma-54. The sequence is that of Anaerobic nitric oxide reductase transcription regulator NorR from Escherichia coli O17:K52:H18 (strain UMN026 / ExPEC).